Here is a 250-residue protein sequence, read N- to C-terminus: Ubiquinone/menaquinone biosynthesis C-methyltransferase UbiE (250 aa).

Residues S73, D94, and 122-123 each bind S-adenosyl-L-methionine; that span reads NA.

The protein belongs to the class I-like SAM-binding methyltransferase superfamily. MenG/UbiE family.

The catalysed reaction is a 2-demethylmenaquinol + S-adenosyl-L-methionine = a menaquinol + S-adenosyl-L-homocysteine + H(+). It carries out the reaction a 2-methoxy-6-(all-trans-polyprenyl)benzene-1,4-diol + S-adenosyl-L-methionine = a 5-methoxy-2-methyl-3-(all-trans-polyprenyl)benzene-1,4-diol + S-adenosyl-L-homocysteine + H(+). It participates in quinol/quinone metabolism; menaquinone biosynthesis; menaquinol from 1,4-dihydroxy-2-naphthoate: step 2/2. Its pathway is cofactor biosynthesis; ubiquinone biosynthesis. In terms of biological role, methyltransferase required for the conversion of demethylmenaquinol (DMKH2) to menaquinol (MKH2) and the conversion of 2-polyprenyl-6-methoxy-1,4-benzoquinol (DDMQH2) to 2-polyprenyl-3-methyl-6-methoxy-1,4-benzoquinol (DMQH2). In Legionella pneumophila (strain Lens), this protein is Ubiquinone/menaquinone biosynthesis C-methyltransferase UbiE.